The chain runs to 369 residues: tRNA(Met) cytidine acetate ligase (369 aa).

ATP-binding positions include 7 to 20, G96, N152, and R175; that span reads VAEFNPFHNGHKYL.

The protein belongs to the TmcAL family.

Its subcellular location is the cytoplasm. The catalysed reaction is cytidine(34) in elongator tRNA(Met) + acetate + ATP = N(4)-acetylcytidine(34) in elongator tRNA(Met) + AMP + diphosphate. Catalyzes the formation of N(4)-acetylcytidine (ac(4)C) at the wobble position of elongator tRNA(Met), using acetate and ATP as substrates. First activates an acetate ion to form acetyladenylate (Ac-AMP) and then transfers the acetyl group to tRNA to form ac(4)C34. This is tRNA(Met) cytidine acetate ligase from Streptococcus agalactiae serotype Ia (strain ATCC 27591 / A909 / CDC SS700).